The sequence spans 321 residues: Glucokinase (321 aa).

8–13 (GDVGGT) serves as a coordination point for ATP.

It belongs to the bacterial glucokinase family.

It is found in the cytoplasm. It carries out the reaction D-glucose + ATP = D-glucose 6-phosphate + ADP + H(+). The polypeptide is Glucokinase (Salmonella choleraesuis (strain SC-B67)).